Reading from the N-terminus, the 368-residue chain is NAD(P)H-quinone oxidoreductase subunit 1, chloroplastic (368 aa).

9 helical membrane-spanning segments follow: residues 11–31, 33–53, 98–118, 131–151, 177–197, 205–225, 255–275, 305–325, and 348–368; these read RVINLSFVLGFIKEIFGLIWI, IYILIPILGVLIGLLVIVWLE, WLFSIGPAIVVIPILSSYLVI, IGVFFRIAVSSIAPLGLLMAG, LALCVLSISLLSNSLGTVDIV, FWGWNLWRQPIGFIAFFISSL, FGLFYVASYLNLLASSLFVTI, VLGITMGILITLAKAYLFLFI, and FLLPIALGNLLLTASFQLLLL.

This sequence belongs to the complex I subunit 1 family. In terms of assembly, NDH is composed of at least 16 different subunits, 5 of which are encoded in the nucleus.

The protein resides in the plastid. The protein localises to the chloroplast thylakoid membrane. The catalysed reaction is a plastoquinone + NADH + (n+1) H(+)(in) = a plastoquinol + NAD(+) + n H(+)(out). It catalyses the reaction a plastoquinone + NADPH + (n+1) H(+)(in) = a plastoquinol + NADP(+) + n H(+)(out). Functionally, NDH shuttles electrons from NAD(P)H:plastoquinone, via FMN and iron-sulfur (Fe-S) centers, to quinones in the photosynthetic chain and possibly in a chloroplast respiratory chain. The immediate electron acceptor for the enzyme in this species is believed to be plastoquinone. Couples the redox reaction to proton translocation, and thus conserves the redox energy in a proton gradient. This Cycas taitungensis (Prince sago) protein is NAD(P)H-quinone oxidoreductase subunit 1, chloroplastic.